We begin with the raw amino-acid sequence, 328 residues long: MKGYMEDREHEKSLQAEKEELKEVSVSYGHEVKLSNLFPTRFGHKNYQHTFEGMDHGRHVHAHGNKMQQLADVFFFRDALRPGSVITPTIPPTTSLPAFLPRHVADAIPFSADRFADVLAMFAPASLAMAREIRWALDTCGQRAAALLPGEKAGCATSLESLADLAASLLGTRDVRAFSAADLPTDAATTPARRGRYNVTSVRELSAMAGSGSSSSSEPAPAAVVACHDLTYPYAVFYCHSTKPTAAYAVTLVAATTGDGDGEGEAASPAKMEALAVCHLDTSRWRADNPFFVAHGVKPGEVSVCHFLTKLSIVWVPRHEQGGPRAAA.

The region spanning 74 to 318 (FFFRDALRPG…TKLSIVWVPR (245 aa)) is the BURP domain.

As to expression, expressed in roots.

The sequence is that of BURP domain-containing protein 11 (BURP11) from Oryza sativa subsp. japonica (Rice).